The sequence spans 63 residues: Large ribosomal subunit protein uL29 (63 aa).

It belongs to the universal ribosomal protein uL29 family.

This chain is Large ribosomal subunit protein uL29, found in Chromohalobacter salexigens (strain ATCC BAA-138 / DSM 3043 / CIP 106854 / NCIMB 13768 / 1H11).